A 255-amino-acid chain; its full sequence is Probable transcriptional regulatory protein CMM_1817 (255 aa).

Belongs to the TACO1 family.

It is found in the cytoplasm. This Clavibacter michiganensis subsp. michiganensis (strain NCPPB 382) protein is Probable transcriptional regulatory protein CMM_1817.